We begin with the raw amino-acid sequence, 440 residues long: Trigger factor (440 aa).

The PPIase FKBP-type domain maps to 176 to 261 (GDKVVIDYQN…VKSIYVVKDV (86 aa)).

This sequence belongs to the FKBP-type PPIase family. Tig subfamily.

It localises to the cytoplasm. The enzyme catalyses [protein]-peptidylproline (omega=180) = [protein]-peptidylproline (omega=0). Involved in protein export. Acts as a chaperone by maintaining the newly synthesized protein in an open conformation. Functions as a peptidyl-prolyl cis-trans isomerase. The polypeptide is Trigger factor (Ehrlichia canis (strain Jake)).